A 166-amino-acid polypeptide reads, in one-letter code: Putative protein PTGES3L (166 aa).

The CS domain occupies 46 to 154 (RQHARTLWYD…RPPPAMDDLD (109 aa)). The interval 142–166 (STKRPPPAMDDLDDDSDSADDATSN) is disordered. Residues 151 to 166 (DDLDDDSDSADDATSN) show a composition bias toward acidic residues.

The protein belongs to the p23/wos2 family.

This is Putative protein PTGES3L from Homo sapiens (Human).